The sequence spans 363 residues: Phospho-N-acetylmuramoyl-pentapeptide-transferase (363 aa).

Transmembrane regions (helical) follow at residues 13–33, 49–69, 95–115, 119–139, 154–174, 183–203, 224–244, 281–301, and 343–363; these read ISGI…AFFL, LPLL…IPLL, MGGI…SNFA, LAVS…DWQI, LALQ…NQPS, WVSF…FVLV, AIAL…LMVF, AVAL…IFFV, and ELQV…ICLA.

Belongs to the glycosyltransferase 4 family. MraY subfamily. Requires Mg(2+) as cofactor.

Its subcellular location is the cell inner membrane. It catalyses the reaction UDP-N-acetyl-alpha-D-muramoyl-L-alanyl-gamma-D-glutamyl-meso-2,6-diaminopimeloyl-D-alanyl-D-alanine + di-trans,octa-cis-undecaprenyl phosphate = di-trans,octa-cis-undecaprenyl diphospho-N-acetyl-alpha-D-muramoyl-L-alanyl-D-glutamyl-meso-2,6-diaminopimeloyl-D-alanyl-D-alanine + UMP. It functions in the pathway cell wall biogenesis; peptidoglycan biosynthesis. In terms of biological role, catalyzes the initial step of the lipid cycle reactions in the biosynthesis of the cell wall peptidoglycan: transfers peptidoglycan precursor phospho-MurNAc-pentapeptide from UDP-MurNAc-pentapeptide onto the lipid carrier undecaprenyl phosphate, yielding undecaprenyl-pyrophosphoryl-MurNAc-pentapeptide, known as lipid I. This is Phospho-N-acetylmuramoyl-pentapeptide-transferase from Nostoc punctiforme (strain ATCC 29133 / PCC 73102).